The chain runs to 393 residues: MSLRIGMVAGEPSGDLLAGRIIAGLQARAPGVHCAGIGGPQMAARGFEAWHPMHALTVFGYIDAFKRIPSLLSTYGDVKRRLLAEPPSVFVGIDAPDFNLRLEHQLRQAGTPTVHFVGPSIWAWRYERINKIRAAVSHMLVLFPFEEALYRKEGIPVTYVGHPLAGVIPMQPDRAAARARLGIDADARVLAILPGSRSSEIRLLAPRFLQAAAELVRRDPRLQCVVPMVNPQRRAEFEAIAAQHPVPGLRCVTAAEGQGETPVAWSVMEASNAVLVASGTATLETALYKRPMVISYVLSPWMRRIMAWKSGQQRPYLPWVGLPNVLLRDFAVPELLQDEATPAALAEATWQALTDEAGAARIEARFTALHQDLLRDTPALAAQAILEVADGAA.

It belongs to the LpxB family.

It catalyses the reaction a lipid X + a UDP-2-N,3-O-bis[(3R)-3-hydroxyacyl]-alpha-D-glucosamine = a lipid A disaccharide + UDP + H(+). It participates in bacterial outer membrane biogenesis; LPS lipid A biosynthesis. In terms of biological role, condensation of UDP-2,3-diacylglucosamine and 2,3-diacylglucosamine-1-phosphate to form lipid A disaccharide, a precursor of lipid A, a phosphorylated glycolipid that anchors the lipopolysaccharide to the outer membrane of the cell. This Bordetella bronchiseptica (strain ATCC BAA-588 / NCTC 13252 / RB50) (Alcaligenes bronchisepticus) protein is Lipid-A-disaccharide synthase.